We begin with the raw amino-acid sequence, 212 residues long: MSLFDKKHLVTQADALPGRNTPMPIATLHAVNEHSMTNVPAGMEIAYFAMGCFWGVERLFWQLPGVYSTAAGYAGGYTPNPTYREVCSGQTGHAEAVRIVYDPAVISYEQLLQIFWENHDPTQGMQQGNDHGTQYRSAIYPLTPEQNAAAHASCERFQSAMAAAGDHRPITTEIAHATPFYYAEDEHQQYLHKNPYGYCGIGGIGVCLPPDA.

Residue Cys-52 is part of the active site.

It belongs to the MsrA Met sulfoxide reductase family.

The catalysed reaction is L-methionyl-[protein] + [thioredoxin]-disulfide + H2O = L-methionyl-(S)-S-oxide-[protein] + [thioredoxin]-dithiol. It catalyses the reaction [thioredoxin]-disulfide + L-methionine + H2O = L-methionine (S)-S-oxide + [thioredoxin]-dithiol. In terms of biological role, has an important function as a repair enzyme for proteins that have been inactivated by oxidation. Catalyzes the reversible oxidation-reduction of methionine sulfoxide in proteins to methionine. This is Peptide methionine sulfoxide reductase MsrA from Salmonella paratyphi B (strain ATCC BAA-1250 / SPB7).